The primary structure comprises 118 residues: Vesicle-associated membrane protein 1 (118 aa).

Over residues 1–15 (MSAPAQPPAEGTEGA) the composition is skewed to low complexity. Residues 1-38 (MSAPAQPPAEGTEGAAPGGGPPGPPPNTTSNRRLQQTQ) form a disordered region. Over 1 to 96 (MSAPAQPPAE…KRKYWWKNCK (96 aa)) the chain is Cytoplasmic. The segment covering 28 to 38 (TTSNRRLQQTQ) has biased composition (polar residues). The 61-residue stretch at 33–93 (RLQQTQAQVE…AKLKRKYWWK (61 aa)) folds into the v-SNARE coiled-coil homology domain. At serine 63 the chain carries Phosphoserine. A helical; Anchor for type IV membrane protein membrane pass occupies residues 97–116 (MMIMLGAICAIIVVVIVIYI). Over 117-118 (FT) the chain is Vesicular.

The protein belongs to the synaptobrevin family. As to quaternary structure, interacts with VAPA and VAPB. Post-translationally, (Microbial infection) Targeted and hydrolyzed by C.botulinum neurotoxin type D (BoNT/D, botD) which hydrolyzes the 61-Lys-|-Leu-62 bond and inhibits neurotransmitter release. This is a poor substrate for BoNT/D, high concentrations are required to cleave it in vitro. (Microbial infection) Targeted and hydrolyzed by C.botulinum neurotoxin type F (BoNT/F, botF) which hydrolyzes the 60-Gln-|-Lys-61 bond and inhibits neurotransmitter release. Expressed in brain and spleen (at protein level). Isoform 1 expressed at very high level in brain. Even higher level found in spinal cord. Isoform 3 expressed in kidney, spleen and liver. Isoforms 2 and 3 expressed in osteoblasts of trabecular bone. Also expressed in heart.

It localises to the cytoplasmic vesicle. The protein resides in the secretory vesicle. It is found in the synaptic vesicle membrane. The protein localises to the synapse. Its subcellular location is the synaptosome. It localises to the cytoplasmic vesicle membrane. The protein resides in the mitochondrion outer membrane. Involved in the targeting and/or fusion of transport vesicles to their target membrane. The chain is Vesicle-associated membrane protein 1 (Vamp1) from Rattus norvegicus (Rat).